A 709-amino-acid chain; its full sequence is Phosphoribosylformylglycinamidine synthase subunit PurL (709 aa).

Residue His-36 is part of the active site. 2 residues coordinate ATP: Tyr-39 and Lys-80. Residue Glu-82 participates in Mg(2+) binding. Substrate is bound by residues 83–86 and Arg-105; that span reads SHNH. The Proton acceptor role is filled by His-84. A Mg(2+)-binding site is contributed by Asp-106. Gln-226 is a binding site for substrate. Asp-252 serves as a coordination point for Mg(2+). 294–296 contacts substrate; that stretch reads ETQ. Residues Asp-470 and Gly-507 each contribute to the ATP site. Ser-510 contributes to the substrate binding site.

The protein belongs to the FGAMS family. Monomer. Part of the FGAM synthase complex composed of 1 PurL, 1 PurQ and 2 PurS subunits.

The protein localises to the cytoplasm. It catalyses the reaction N(2)-formyl-N(1)-(5-phospho-beta-D-ribosyl)glycinamide + L-glutamine + ATP + H2O = 2-formamido-N(1)-(5-O-phospho-beta-D-ribosyl)acetamidine + L-glutamate + ADP + phosphate + H(+). It functions in the pathway purine metabolism; IMP biosynthesis via de novo pathway; 5-amino-1-(5-phospho-D-ribosyl)imidazole from N(2)-formyl-N(1)-(5-phospho-D-ribosyl)glycinamide: step 1/2. Part of the phosphoribosylformylglycinamidine synthase complex involved in the purines biosynthetic pathway. Catalyzes the ATP-dependent conversion of formylglycinamide ribonucleotide (FGAR) and glutamine to yield formylglycinamidine ribonucleotide (FGAM) and glutamate. The FGAM synthase complex is composed of three subunits. PurQ produces an ammonia molecule by converting glutamine to glutamate. PurL transfers the ammonia molecule to FGAR to form FGAM in an ATP-dependent manner. PurS interacts with PurQ and PurL and is thought to assist in the transfer of the ammonia molecule from PurQ to PurL. The polypeptide is Phosphoribosylformylglycinamidine synthase subunit PurL (Saccharolobus islandicus (strain M.16.4 / Kamchatka #3) (Sulfolobus islandicus)).